The chain runs to 76 residues: Small ribosomal subunit protein bS18 (76 aa).

It belongs to the bacterial ribosomal protein bS18 family. As to quaternary structure, part of the 30S ribosomal subunit. Forms a tight heterodimer with protein bS6.

Its function is as follows. Binds as a heterodimer with protein bS6 to the central domain of the 16S rRNA, where it helps stabilize the platform of the 30S subunit. The sequence is that of Small ribosomal subunit protein bS18 from Petrotoga mobilis (strain DSM 10674 / SJ95).